The following is an 821-amino-acid chain: Centrosomal protein of 95 kDa (821 aa).

Disordered regions lie at residues 310–354 (TLCK…FPQK), 390–474 (ATGE…DTHH), and 514–550 (KEAFAKGTTKQSQVQKIYSRKTAAPTPKGGLLKSSKA). Basic and acidic residues-rich tracts occupy residues 325–340 (ESSKTRRLSKGERSEN) and 390–410 (ATGEAHGKDGGAGDEEAHSAN). A compositionally biased stretch (basic residues) spans 427-441 (RKPRPGFSMHRKAPY). Phosphoserine occurs at positions 445, 447, and 449. 2 coiled-coil regions span residues 578–627 (LTKM…VKKE) and 695–789 (LQIQ…DDDA).

It is found in the cytoplasm. The protein resides in the cytoskeleton. It localises to the microtubule organizing center. The protein localises to the centrosome. Its subcellular location is the spindle pole. The protein is Centrosomal protein of 95 kDa (Cep95) of Rattus norvegicus (Rat).